Reading from the N-terminus, the 428-residue chain is Enolase (428 aa).

(2R)-2-phosphoglycerate is bound at residue Gln165. Residue Glu207 is the Proton donor of the active site. Mg(2+) contacts are provided by Asp244, Glu285, and Asp312. (2R)-2-phosphoglycerate is bound by residues Lys337, Arg366, Ser367, and Lys388. Lys337 (proton acceptor) is an active-site residue.

It belongs to the enolase family. As to quaternary structure, component of the RNA degradosome, a multiprotein complex involved in RNA processing and mRNA degradation. Mg(2+) serves as cofactor.

The protein localises to the cytoplasm. The protein resides in the secreted. It is found in the cell surface. It carries out the reaction (2R)-2-phosphoglycerate = phosphoenolpyruvate + H2O. Its pathway is carbohydrate degradation; glycolysis; pyruvate from D-glyceraldehyde 3-phosphate: step 4/5. In terms of biological role, catalyzes the reversible conversion of 2-phosphoglycerate (2-PG) into phosphoenolpyruvate (PEP). It is essential for the degradation of carbohydrates via glycolysis. This is Enolase from Coxiella burnetii (strain CbuK_Q154) (Coxiella burnetii (strain Q154)).